A 227-amino-acid chain; its full sequence is Uracil-DNA glycosylase (227 aa).

Residue D68 is the Proton acceptor of the active site.

Belongs to the uracil-DNA glycosylase (UDG) superfamily. UNG family.

Its subcellular location is the cytoplasm. The enzyme catalyses Hydrolyzes single-stranded DNA or mismatched double-stranded DNA and polynucleotides, releasing free uracil.. Functionally, excises uracil residues from the DNA which can arise as a result of misincorporation of dUMP residues by DNA polymerase or due to deamination of cytosine. The protein is Uracil-DNA glycosylase of Mycobacterium avium (strain 104).